The following is a 506-amino-acid chain: BTB/POZ domain-containing protein At3g22104 (506 aa).

The region spanning 6-76 (SDLEVDINGE…CYNDGRVAVM (71 aa)) is the BTB domain. Residues 187–435 (TWWFDEVLVL…LDEQQQQQQQ (249 aa)) form the NPH3 domain. The stretch at 421–492 (QAIETLDEQQ…MEVIKKRSKS (72 aa)) forms a coiled coil. The disordered stretch occupies residues 485–506 (VIKKRSKSSSKGSNRSLPKLCS).

It belongs to the NPH3 family.

Its pathway is protein modification; protein ubiquitination. May act as a substrate-specific adapter of an E3 ubiquitin-protein ligase complex (CUL3-RBX1-BTB) which mediates the ubiquitination and subsequent proteasomal degradation of target proteins. This is BTB/POZ domain-containing protein At3g22104 from Arabidopsis thaliana (Mouse-ear cress).